A 936-amino-acid chain; its full sequence is UPF0746 protein DDB_G0280787 (936 aa).

The span at 1–19 shows a compositional bias: basic and acidic residues; that stretch reads MISNKRKEIDTIDGHHEKD. The disordered stretch occupies residues 1–30; the sequence is MISNKRKEIDTIDGHHEKDNDDDDSDGIDN. The 35-residue stretch at 44-78 folds into the SAP domain; that stretch reads SGSTNYRELQIIAKSLGLASNGKKQLVYNRIEGYF. The interval 91-110 is disordered; sequence ETNQQEEKKEEEQQQPQPQE.

The protein belongs to the UPF0746 family.

This chain is UPF0746 protein DDB_G0280787, found in Dictyostelium discoideum (Social amoeba).